The chain runs to 262 residues: Phosphatidylglycerol--prolipoprotein diacylglyceryl transferase 1 (262 aa).

A run of 4 helical transmembrane segments spans residues 15 to 35 (WYGI…SINA), 40 to 60 (LNFD…IIGA), 83 to 103 (QGGL…FIYC), and 108 to 128 (VDFL…QGIG). A 1,2-diacyl-sn-glycero-3-phospho-(1'-sn-glycerol) is bound at residue Arg-129. Transmembrane regions (helical) follow at residues 169–189 (TFLY…IILY), 197–217 (GVVI…IEGL), and 229–249 (VAQL…IIIV).

It belongs to the Lgt family.

It localises to the cell membrane. It carries out the reaction L-cysteinyl-[prolipoprotein] + a 1,2-diacyl-sn-glycero-3-phospho-(1'-sn-glycerol) = an S-1,2-diacyl-sn-glyceryl-L-cysteinyl-[prolipoprotein] + sn-glycerol 1-phosphate + H(+). It participates in protein modification; lipoprotein biosynthesis (diacylglyceryl transfer). Catalyzes the transfer of the diacylglyceryl group from phosphatidylglycerol to the sulfhydryl group of the N-terminal cysteine of a prolipoprotein, the first step in the formation of mature lipoproteins. The protein is Phosphatidylglycerol--prolipoprotein diacylglyceryl transferase 1 of Clostridium perfringens (strain 13 / Type A).